A 313-amino-acid chain; its full sequence is Aspartate carbamoyltransferase catalytic subunit (313 aa).

Residues Arg-59 and Thr-60 each contribute to the carbamoyl phosphate site. An L-aspartate-binding site is contributed by Lys-87. Residues Arg-109, His-137, and Gln-140 each contribute to the carbamoyl phosphate site. L-aspartate-binding residues include Arg-170 and Arg-224. The carbamoyl phosphate site is built by Gly-265 and Pro-266.

It belongs to the aspartate/ornithine carbamoyltransferase superfamily. ATCase family. In terms of assembly, heterododecamer (2C3:3R2) of six catalytic PyrB chains organized as two trimers (C3), and six regulatory PyrI chains organized as three dimers (R2).

The catalysed reaction is carbamoyl phosphate + L-aspartate = N-carbamoyl-L-aspartate + phosphate + H(+). The protein operates within pyrimidine metabolism; UMP biosynthesis via de novo pathway; (S)-dihydroorotate from bicarbonate: step 2/3. Catalyzes the condensation of carbamoyl phosphate and aspartate to form carbamoyl aspartate and inorganic phosphate, the committed step in the de novo pyrimidine nucleotide biosynthesis pathway. In Sinorhizobium medicae (strain WSM419) (Ensifer medicae), this protein is Aspartate carbamoyltransferase catalytic subunit.